We begin with the raw amino-acid sequence, 146 residues long: UPF0306 protein CKO_04548 (146 aa).

The protein belongs to the UPF0306 family.

This chain is UPF0306 protein CKO_04548, found in Citrobacter koseri (strain ATCC BAA-895 / CDC 4225-83 / SGSC4696).